Here is a 346-residue protein sequence, read N- to C-terminus: Aspartate-semialdehyde dehydrogenase (346 aa).

Residues 12–15 and 40–41 contribute to the NADP(+) site; these read SGAV and RS. A phosphate-binding site is contributed by Arg101. Cys131 acts as the Acyl-thioester intermediate in catalysis. Gln158 is a binding site for substrate. Residue 161-162 participates in NADP(+) binding; that stretch reads SG. Lys225 serves as a coordination point for phosphate. Arg246 serves as a coordination point for substrate. The active-site Proton acceptor is His253. Gln326 contributes to the NADP(+) binding site.

This sequence belongs to the aspartate-semialdehyde dehydrogenase family. Homodimer.

The catalysed reaction is L-aspartate 4-semialdehyde + phosphate + NADP(+) = 4-phospho-L-aspartate + NADPH + H(+). Its pathway is amino-acid biosynthesis; L-lysine biosynthesis via DAP pathway; (S)-tetrahydrodipicolinate from L-aspartate: step 2/4. It functions in the pathway amino-acid biosynthesis; L-methionine biosynthesis via de novo pathway; L-homoserine from L-aspartate: step 2/3. It participates in amino-acid biosynthesis; L-threonine biosynthesis; L-threonine from L-aspartate: step 2/5. Catalyzes the NADPH-dependent formation of L-aspartate-semialdehyde (L-ASA) by the reductive dephosphorylation of L-aspartyl-4-phosphate. This Helicobacter pylori (strain J99 / ATCC 700824) (Campylobacter pylori J99) protein is Aspartate-semialdehyde dehydrogenase.